The following is a 343-amino-acid chain: MQLNERKLKILQAIIQDYIYTAEPVGSRSLSKKYDLQVSPATIRNEMADLEDMGYLIQPYTSAGRIPSDKGYRLYVDHLLQLEKNMVIQRDQIRSDLLNRFGEIEQLLQYSSKILSQLTNYTTIALAPQIKEVRLKHIQLIPMDEHHLLGIIITDTGLIKKTVLQVPEGLDAEAISKISEVINGRLQGVAIKGIPGEFTEEFTHELEQLSHGFDSVIPKMFQTLEELDKIELFLHGTTNIFNFPEFNDIFKAKSFLSMLEEKELISQLILSSSHKGMNATIGSENIYKEAKEYSLVTATYKIDEDVIGFVSIIGPTRMDYSNVMSTMGQVNKYINEVLKGKYK.

The protein belongs to the HrcA family.

Its function is as follows. Negative regulator of class I heat shock genes (grpE-dnaK-dnaJ and groELS operons). Prevents heat-shock induction of these operons. The chain is Heat-inducible transcription repressor HrcA from Alkaliphilus metalliredigens (strain QYMF).